The primary structure comprises 715 residues: ATP-dependent zinc metalloprotease YME1L1 (715 aa).

The Mitochondrial matrix segment spans residues 1–237 (MFSLSSTVQP…TNDSLRRTRL (237 aa)). Positions 34–54 (NTPVSQKQHRDTVPEHEAPSS) are disordered. Residues 41–52 (QHRDTVPEHEAP) are compositionally biased toward basic and acidic residues. Residues 238–258 (ILFVLLLFGIYGLLKNPFLSV) form a helical membrane-spanning segment. The Mitochondrial intermembrane segment spans residues 259–715 (RFRTTTGLDS…VLEGKKLEVR (457 aa)). The ATP site is built by Val-283, Thr-325, Gly-326, Lys-327, Thr-328, and Leu-329. His-541 contributes to the Zn(2+) binding site. The active site involves Glu-542. Zn(2+)-binding residues include His-545 and Asp-619.

It in the N-terminal section; belongs to the AAA ATPase family. This sequence in the C-terminal section; belongs to the peptidase M41 family. Homohexamer; may also form heterohexamers. Exists in several complexes of 600-1100 kDa. Interacts with AFG1L. Zn(2+) is required as a cofactor. Proteolytically processed by mitochondrial processing peptidase (MPP) to generate the mature form. Degraded in an OMA1-dependent manner in response to oxidative stress. Detected in heart and skeletal muscle (at protein level).

It localises to the mitochondrion inner membrane. The protein localises to the mitochondrion. The catalysed reaction is ATP + H2O = ADP + phosphate + H(+). Its function is as follows. ATP-dependent metalloprotease that catalyzes the degradation of folded and unfolded proteins with a suitable degron sequence in the mitochondrial intermembrane region. Plays an important role in regulating mitochondrial morphology and function by cleaving OPA1 at position S2, giving rise to a form of OPA1 that promotes maintenance of normal mitochondrial structure and mitochondrial protein metabolism. Ensures cell proliferation, maintains normal cristae morphology and complex I respiration activity, promotes antiapoptotic activity and protects mitochondria from the accumulation of oxidatively damaged membrane proteins. Required to control the accumulation of nonassembled respiratory chain subunits (NDUFB6, OX4 and ND1). Involved in the mitochondrial adaptation in response to various signals, such as stress or developmental cues, by mediating degradation of mitochondrial proteins to rewire the mitochondrial proteome. Catalyzes degradation of mitochondrial proteins, such as translocases, lipid transfer proteins and metabolic enzymes in response to nutrient starvation in order to limit mitochondrial biogenesis: mechanistically, YME1L is activated by decreased phosphatidylethanolamine levels caused by LPIN1 activity in response to mTORC1 inhibition. Acts as a regulator of adult neural stem cell self-renewal by promoting mitochondrial proteome rewiring, preserving neural stem and progenitor cells self-renewal. Required for normal, constitutive degradation of PRELID1. Catalyzes the degradation of OMA1 in response to membrane depolarization. Mediates degradation of TIMM17A downstream of the integrated stress response (ISR). Catalyzes degradation of MICU1 when MICU1 is not assembled via an interchain disulfide. The polypeptide is ATP-dependent zinc metalloprotease YME1L1 (Yme1l1) (Mus musculus (Mouse)).